Consider the following 131-residue polypeptide: Interleukin-13 (131 aa).

An N-terminal signal peptide occupies residues 1 to 18; sequence MALWVTAVLALACLGGLA. N-linked (GlcNAc...) asparagine glycans are attached at residues Asn42, Asn53, Asn76, and Asn121. 2 disulfides stabilise this stretch: Cys52-Cys80 and Cys68-Cys94.

Belongs to the IL-4/IL-13 family. As to quaternary structure, interacts with IL13RA2.

Its subcellular location is the secreted. Cytokine that plays important roles in allergic inflammation and immune response to parasite infection. Synergizes with IL2 in regulating interferon-gamma synthesis. Stimulates B-cell proliferation, and activation of eosinophils, basophils, and mast cells. Plays an important role in controlling IL33 activity by modulating the production of transmembrane and soluble forms of interleukin-1 receptor-like 1/IL1RL1. Displays the capacity to antagonize Th1-driven proinflammatory immune response and downregulates synthesis of many proinflammatory cytokines including IL1, IL6, IL10, IL12 and TNF-alpha through a mechanism that partially involves suppression of NF-kappa-B. Also functions on nonhematopoietic cells, including endothelial cells where it induces vascular cell adhesion protein 1/VCAM1, which is important in the recruitment of eosinophils. Exerts its biological effects through its receptors which comprises the IL4R chain and the IL13RA1 chain, to activate JAK1 and TYK2, leading to the activation of STAT6. Aside from IL13RA1, another receptor IL13RA2 acts as a high affinity decoy for IL13 and mediates internalization and depletion of extracellular IL13. This is Interleukin-13 (Il13) from Rattus norvegicus (Rat).